A 718-amino-acid chain; its full sequence is Peroxisomal bifunctional enzyme (718 aa).

The tract at residues 2-280 is enoyl-CoA hydratase / isomerase; the sequence is ARYELVKRSV…FAQRTAEKWT (279 aa). Substrate is bound at residue Gly100. A 3-hydroxyacyl-CoA dehydrogenase region spans residues 281–567; sequence LPSGAQWNNS…DMVCQQGRFG (287 aa). Residues 716 to 718 carry the Microbody targeting signal motif; sequence SHL.

It in the N-terminal section; belongs to the enoyl-CoA hydratase/isomerase family. This sequence in the C-terminal section; belongs to the 3-hydroxyacyl-CoA dehydrogenase family. In terms of assembly, monomer.

The protein resides in the peroxisome. The enzyme catalyses a (3S)-3-hydroxyacyl-CoA = a (2E)-enoyl-CoA + H2O. The catalysed reaction is a 4-saturated-(3S)-3-hydroxyacyl-CoA = a (3E)-enoyl-CoA + H2O. It catalyses the reaction a (3Z)-enoyl-CoA = a 4-saturated (2E)-enoyl-CoA. It carries out the reaction a (3E)-enoyl-CoA = a 4-saturated (2E)-enoyl-CoA. The enzyme catalyses a (3S)-3-hydroxyacyl-CoA + NAD(+) = a 3-oxoacyl-CoA + NADH + H(+). The catalysed reaction is (2S,3S)-3-hydroxy-2-methylbutanoyl-CoA = (2E)-2-methylbut-2-enoyl-CoA + H2O. It catalyses the reaction (3S)-hydroxyhexadecanoyl-CoA + NAD(+) = 3-oxohexadecanoyl-CoA + NADH + H(+). It carries out the reaction (3S)-hydroxyhexadecanoyl-CoA = (2E)-hexadecenoyl-CoA + H2O. The enzyme catalyses (2E)-hexadecenedioyl-CoA + H2O = (3S)-hydroxyhexadecanedioyl-CoA. The catalysed reaction is (3S)-hydroxyhexadecanedioyl-CoA + NAD(+) = 3-oxohexadecanedioyl-CoA + NADH + H(+). It catalyses the reaction (3E,5Z)-tetradecadienoyl-CoA = (2E,5Z)-tetradecadienoyl-CoA. It carries out the reaction (3E,5Z)-octadienoyl-CoA = (2E,5Z)-octadienoyl-CoA. The enzyme catalyses (3S)-hydroxydecanoyl-CoA + NAD(+) = 3-oxodecanoyl-CoA + NADH + H(+). The catalysed reaction is (3E)-decenoyl-CoA = (2E)-decenoyl-CoA. It catalyses the reaction (3Z)-hexenoyl-CoA = (2E)-hexenoyl-CoA. It carries out the reaction (3E)-hexenoyl-CoA = (2E)-hexenoyl-CoA. The enzyme catalyses (3S)-hydroxydecanoyl-CoA = (2E)-decenoyl-CoA + H2O. The catalysed reaction is (3S)-hydroxyhexanoyl-CoA = (2E)-hexenoyl-CoA + H2O. The protein operates within lipid metabolism; fatty acid beta-oxidation. Its function is as follows. Peroxisomal trifunctional enzyme possessing 2-enoyl-CoA hydratase, 3-hydroxyacyl-CoA dehydrogenase, and delta 3, delta 2-enoyl-CoA isomerase activities. Catalyzes two of the four reactions of the long straight chain fatty acids peroxisomal beta-oxidation pathway. Can also use branched-chain fatty acids such as 2-methyl-2E-butenoyl-CoA as a substrate, which is hydrated into (2S,3S)-3-hydroxy-2-methylbutanoyl-CoA. Optimal isomerase for 2,5 double bonds into 3,5 form isomerization in a range of enoyl-CoA species. Also able to isomerize both 3-cis and 3-trans double bonds into the 2-trans form in a range of enoyl-CoA species. Regulates the amount of medium-chain dicarboxylic fatty acids which are essential regulators of all fatty acid oxidation pathways. Also involved in the degradation of long-chain dicarboxylic acids through peroxisomal beta-oxidation. In Danio rerio (Zebrafish), this protein is Peroxisomal bifunctional enzyme (ehhadh).